The sequence spans 260 residues: 21S rRNA pseudouridine(2819) synthase (260 aa).

The active site involves D68.

Belongs to the pseudouridine synthase RluA family.

It is found in the mitochondrion. The catalysed reaction is uridine(2819) in 21S rRNA = pseudouridine(2819) in 21S rRNA. Functionally, pseudouridylate synthase responsible for the pseudouridine-2819 formation in mitochondrial 21S rRNA. May modulate the efficiency or the fidelity of the mitochondrial translation machinery. This is 21S rRNA pseudouridine(2819) synthase (PUS5) from Eremothecium gossypii (strain ATCC 10895 / CBS 109.51 / FGSC 9923 / NRRL Y-1056) (Yeast).